The sequence spans 313 residues: Protoheme IX farnesyltransferase (313 aa).

8 helical membrane-spanning segments follow: residues 32-52 (VMSL…GDFH), 53-73 (PVLA…AGAL), 120-140 (ILVN…YVVI), 153-173 (IVIG…AVTG), 180-200 (LLLF…LALF), 226-246 (ILLY…LGYF), 248-268 (AIYG…ALRV), and 284-304 (LFKF…LEVV).

Belongs to the UbiA prenyltransferase family. Protoheme IX farnesyltransferase subfamily.

The protein localises to the cell inner membrane. It carries out the reaction heme b + (2E,6E)-farnesyl diphosphate + H2O = Fe(II)-heme o + diphosphate. It functions in the pathway porphyrin-containing compound metabolism; heme O biosynthesis; heme O from protoheme: step 1/1. Functionally, converts heme B (protoheme IX) to heme O by substitution of the vinyl group on carbon 2 of heme B porphyrin ring with a hydroxyethyl farnesyl side group. The chain is Protoheme IX farnesyltransferase from Rhodopseudomonas palustris (strain HaA2).